The primary structure comprises 456 residues: Exodeoxyribonuclease 7 large subunit (456 aa).

This sequence belongs to the XseA family. As to quaternary structure, heterooligomer composed of large and small subunits.

Its subcellular location is the cytoplasm. It carries out the reaction Exonucleolytic cleavage in either 5'- to 3'- or 3'- to 5'-direction to yield nucleoside 5'-phosphates.. Bidirectionally degrades single-stranded DNA into large acid-insoluble oligonucleotides, which are then degraded further into small acid-soluble oligonucleotides. This is Exodeoxyribonuclease 7 large subunit from Shigella boydii serotype 18 (strain CDC 3083-94 / BS512).